Here is a 496-residue protein sequence, read N- to C-terminus: UDP-glycosyltransferase 73C2 (496 aa).

Residues Ser297, 357–359, 374–382, and 396–399 contribute to the UDP-alpha-D-glucose site; these read SPQ, HCGWNSTLE, and FGDQ.

It belongs to the UDP-glycosyltransferase family.

In Arabidopsis thaliana (Mouse-ear cress), this protein is UDP-glycosyltransferase 73C2 (UGT73C2).